Here is a 246-residue protein sequence, read N- to C-terminus: Probable transcriptional regulatory protein YebC (246 aa).

Residues 1–20 are disordered; it reads MAGHSKWANTRHRKAAQDAK.

The protein belongs to the TACO1 family.

The protein localises to the cytoplasm. In Shigella dysenteriae serotype 1 (strain Sd197), this protein is Probable transcriptional regulatory protein YebC.